A 119-amino-acid polypeptide reads, in one-letter code: Chymotrypsin inhibitor WCI (119 aa).

Cystine bridges form between C6-C55, C20-C44, C29-C87, C45-C105, and C57-C116.

Its subcellular location is the secreted. In terms of biological role, inhibits bovine, insect and wheat chymotrypsins. Inhibits bovine chymotrypsin with Ki of 0.6 nM. Does not inhibit human or wheat alpha-amylases, bovine pancreatic trypsin, or trypsin-like activity isolated from wheat. The sequence is that of Chymotrypsin inhibitor WCI from Triticum aestivum (Wheat).